The primary structure comprises 199 residues: NAD(P)H dehydrogenase (quinone) (199 aa).

Residues 4–190 enclose the Flavodoxin-like domain; that stretch reads ILVLYYSMYG…AIARFQGEHV (187 aa). FMN-binding positions include 10–15 and 79–81; these read SMYGHI and TRF. Tyrosine 12 lines the NAD(+) pocket. Tryptophan 99 serves as a coordination point for substrate. FMN contacts are provided by residues 114–119 and histidine 134; that span reads STGTGG.

Belongs to the WrbA family. Requires FMN as cofactor.

The enzyme catalyses a quinone + NADH + H(+) = a quinol + NAD(+). It catalyses the reaction a quinone + NADPH + H(+) = a quinol + NADP(+). The sequence is that of NAD(P)H dehydrogenase (quinone) from Yersinia pseudotuberculosis serotype O:1b (strain IP 31758).